A 74-amino-acid chain; its full sequence is Conotoxin MiEr93 (74 aa).

Residues 1–22 (MKLTCVLIIAVLFLTAYQLATA) form the signal peptide. Positions 23–45 (ASYAKGKQKHRALRPADKHLRLT) are excised as a propeptide. 3 disulfides stabilise this stretch: Cys-48-Cys-62, Cys-55-Cys-66, and Cys-61-Cys-73.

The protein belongs to the conotoxin O1 superfamily. In terms of tissue distribution, expressed by the venom duct.

It localises to the secreted. The protein is Conotoxin MiEr93 of Conus miles (Soldier cone).